The sequence spans 318 residues: tRNA dimethylallyltransferase (318 aa).

9 to 16 (GATASGKT) contributes to the ATP binding site. Residue 11–16 (TASGKT) coordinates substrate. 2 interaction with substrate tRNA regions span residues 34-37 (DSAQ) and 158-162 (QRIIR).

This sequence belongs to the IPP transferase family. As to quaternary structure, monomer. The cofactor is Mg(2+).

The enzyme catalyses adenosine(37) in tRNA + dimethylallyl diphosphate = N(6)-dimethylallyladenosine(37) in tRNA + diphosphate. Catalyzes the transfer of a dimethylallyl group onto the adenine at position 37 in tRNAs that read codons beginning with uridine, leading to the formation of N6-(dimethylallyl)adenosine (i(6)A). The polypeptide is tRNA dimethylallyltransferase (Dichelobacter nodosus (strain VCS1703A)).